The following is a 218-amino-acid chain: 7-cyano-7-deazaguanine synthase (218 aa).

Position 9 to 19 (9 to 19 (FSGGMDSFTVL)) interacts with ATP. C185, C193, C196, and C199 together coordinate Zn(2+).

It belongs to the QueC family. The cofactor is Zn(2+).

The enzyme catalyses 7-carboxy-7-deazaguanine + NH4(+) + ATP = 7-cyano-7-deazaguanine + ADP + phosphate + H2O + H(+). It functions in the pathway purine metabolism; 7-cyano-7-deazaguanine biosynthesis. Functionally, catalyzes the ATP-dependent conversion of 7-carboxy-7-deazaguanine (CDG) to 7-cyano-7-deazaguanine (preQ(0)). The sequence is that of 7-cyano-7-deazaguanine synthase from Pseudoalteromonas atlantica (strain T6c / ATCC BAA-1087).